Consider the following 473-residue polypeptide: Photosystem II CP43 reaction center protein (473 aa).

A propeptide spanning residues 1-14 (MKTLYSLRRFSHVE) is cleaved from the precursor. The residue at position 15 (threonine 15) is an N-acetylthreonine. A Phosphothreonine modification is found at threonine 15. The next 5 helical transmembrane spans lie at 69–93 (LFEVAHFGPEKPMYEQGLILLPHLA), 134–155 (LLGPEIIEESFPLFRYVWKDRN), 178–200 (KALYFGGVYDTWAPGGGDVRKIT), 255–275 (KPFAWARRALVWSGEAYLSYS), and 291–312 (WFNNTAYPSEFYGPTGPEASQA). Residue glutamate 367 coordinates [CaMn4O5] cluster. Residues 447 to 471 (RARAAAAGFEKGIDRDFEPVLSMTP) form a helical membrane-spanning segment.

It belongs to the PsbB/PsbC family. PsbC subfamily. In terms of assembly, PSII is composed of 1 copy each of membrane proteins PsbA, PsbB, PsbC, PsbD, PsbE, PsbF, PsbH, PsbI, PsbJ, PsbK, PsbL, PsbM, PsbT, PsbX, PsbY, PsbZ, Psb30/Ycf12, at least 3 peripheral proteins of the oxygen-evolving complex and a large number of cofactors. It forms dimeric complexes. It depends on Binds multiple chlorophylls and provides some of the ligands for the Ca-4Mn-5O cluster of the oxygen-evolving complex. It may also provide a ligand for a Cl- that is required for oxygen evolution. PSII binds additional chlorophylls, carotenoids and specific lipids. as a cofactor.

The protein resides in the plastid membrane. Its function is as follows. One of the components of the core complex of photosystem II (PSII). It binds chlorophyll and helps catalyze the primary light-induced photochemical processes of PSII. PSII is a light-driven water:plastoquinone oxidoreductase, using light energy to abstract electrons from H(2)O, generating O(2) and a proton gradient subsequently used for ATP formation. This chain is Photosystem II CP43 reaction center protein, found in Cuscuta obtusiflora (Peruvian dodder).